We begin with the raw amino-acid sequence, 155 residues long: Probable jacalin-related lectin 26 (155 aa).

The next 2 helical transmembrane spans lie at 26–48 (AYLY…IAMI) and 127–149 (VSFV…VLFL). In terms of domain architecture, Jacalin-type lectin spans 47-155 (MIRAGSVGKK…VLFLMKFKRS (109 aa)).

It belongs to the jacalin lectin family.

It is found in the membrane. This chain is Probable jacalin-related lectin 26 (JAL26), found in Arabidopsis thaliana (Mouse-ear cress).